The primary structure comprises 346 residues: Peroxidase 9 (346 aa).

Residues 1–23 (MAISKLIPTLVLFVLFSFDVSVA) form the signal peptide. 4 cysteine pairs are disulfide-bonded: Cys-54–Cys-134, Cys-87–Cys-92, Cys-140–Cys-342, and Cys-219–Cys-251. The Proton acceptor role is filled by His-85. Ca(2+) is bound by residues Asp-86, Val-89, Gly-91, Asp-93, and Ser-95. Pro-182 provides a ligand contact to substrate. Asn-185 is a glycosylation site (N-linked (GlcNAc...) asparagine). Residue His-212 participates in heme b binding. Residue Thr-213 coordinates Ca(2+). Residues Asp-264, Ser-267, and Asp-272 each coordinate Ca(2+).

Belongs to the peroxidase family. Classical plant (class III) peroxidase subfamily. Heme b serves as cofactor. It depends on Ca(2+) as a cofactor.

It localises to the secreted. It catalyses the reaction 2 a phenolic donor + H2O2 = 2 a phenolic radical donor + 2 H2O. Functionally, removal of H(2)O(2), oxidation of toxic reductants, biosynthesis and degradation of lignin, suberization, auxin catabolism, response to environmental stresses such as wounding, pathogen attack and oxidative stress. These functions might be dependent on each isozyme/isoform in each plant tissue. The sequence is that of Peroxidase 9 (PER9) from Arabidopsis thaliana (Mouse-ear cress).